Here is a 123-residue protein sequence, read N- to C-terminus: Transmembrane protein 254 (123 aa).

Ala2 carries the N-acetylalanine modification. 3 helical membrane-spanning segments follow: residues 15–35 (LFWF…VFWP), 61–81 (LCNG…YAIV), and 95–115 (LLWF…LIAY).

The protein localises to the membrane. This is Transmembrane protein 254 (TMEM254) from Pongo abelii (Sumatran orangutan).